Here is a 612-residue protein sequence, read N- to C-terminus: Dihydroxy-acid dehydratase (612 aa).

D81 contacts Mg(2+). C122 is a [2Fe-2S] cluster binding site. Residues D123 and K124 each contribute to the Mg(2+) site. Position 124 is an N6-carboxylysine (K124). Residue C193 participates in [2Fe-2S] cluster binding. Residue E489 coordinates Mg(2+). Residue S515 is the Proton acceptor of the active site.

This sequence belongs to the IlvD/Edd family. Homodimer. [2Fe-2S] cluster is required as a cofactor. It depends on Mg(2+) as a cofactor.

The catalysed reaction is (2R)-2,3-dihydroxy-3-methylbutanoate = 3-methyl-2-oxobutanoate + H2O. The enzyme catalyses (2R,3R)-2,3-dihydroxy-3-methylpentanoate = (S)-3-methyl-2-oxopentanoate + H2O. It functions in the pathway amino-acid biosynthesis; L-isoleucine biosynthesis; L-isoleucine from 2-oxobutanoate: step 3/4. It participates in amino-acid biosynthesis; L-valine biosynthesis; L-valine from pyruvate: step 3/4. Functionally, functions in the biosynthesis of branched-chain amino acids. Catalyzes the dehydration of (2R,3R)-2,3-dihydroxy-3-methylpentanoate (2,3-dihydroxy-3-methylvalerate) into 2-oxo-3-methylpentanoate (2-oxo-3-methylvalerate) and of (2R)-2,3-dihydroxy-3-methylbutanoate (2,3-dihydroxyisovalerate) into 2-oxo-3-methylbutanoate (2-oxoisovalerate), the penultimate precursor to L-isoleucine and L-valine, respectively. The sequence is that of Dihydroxy-acid dehydratase from Pseudomonas paraeruginosa (strain DSM 24068 / PA7) (Pseudomonas aeruginosa (strain PA7)).